A 356-amino-acid chain; its full sequence is tRNA-specific 2-thiouridylase MnmA (356 aa).

ATP contacts are provided by residues 6–13 (AMSGGVDS) and leucine 32. Cysteine 101 functions as the Nucleophile in the catalytic mechanism. Cysteine 101 and cysteine 193 are oxidised to a cystine. An ATP-binding site is contributed by glycine 125. Positions 143 to 145 (KDQ) are interaction with tRNA. Residue cysteine 193 is the Cysteine persulfide intermediate of the active site.

It belongs to the MnmA/TRMU family.

The protein resides in the cytoplasm. The enzyme catalyses S-sulfanyl-L-cysteinyl-[protein] + uridine(34) in tRNA + AH2 + ATP = 2-thiouridine(34) in tRNA + L-cysteinyl-[protein] + A + AMP + diphosphate + H(+). In terms of biological role, catalyzes the 2-thiolation of uridine at the wobble position (U34) of tRNA, leading to the formation of s(2)U34. This Mycolicibacterium smegmatis (strain ATCC 700084 / mc(2)155) (Mycobacterium smegmatis) protein is tRNA-specific 2-thiouridylase MnmA.